The following is a 380-amino-acid chain: Cytochrome b (380 aa).

4 helical membrane passes run 34 to 54, 78 to 99, 114 to 134, and 179 to 199; these read FGSL…LLAM, WLIR…YLHI, WNTG…GYVL, and FFAL…IHLT. Heme b is bound by residues H84 and H98. Heme b contacts are provided by H183 and H197. H202 is a binding site for a ubiquinone. 4 consecutive transmembrane segments (helical) span residues 227–247, 289–309, 321–341, and 348–368; these read LKDF…ALFT, LGGV…PFLH, LSQT…WIGS, and FITI…ILFP.

Belongs to the cytochrome b family. As to quaternary structure, the cytochrome bc1 complex contains 11 subunits: 3 respiratory subunits (MT-CYB, CYC1 and UQCRFS1), 2 core proteins (UQCRC1 and UQCRC2) and 6 low-molecular weight proteins (UQCRH/QCR6, UQCRB/QCR7, UQCRQ/QCR8, UQCR10/QCR9, UQCR11/QCR10 and a cleavage product of UQCRFS1). This cytochrome bc1 complex then forms a dimer. Heme b serves as cofactor.

The protein resides in the mitochondrion inner membrane. Functionally, component of the ubiquinol-cytochrome c reductase complex (complex III or cytochrome b-c1 complex) that is part of the mitochondrial respiratory chain. The b-c1 complex mediates electron transfer from ubiquinol to cytochrome c. Contributes to the generation of a proton gradient across the mitochondrial membrane that is then used for ATP synthesis. This Coracias caudatus (Lilac-breasted roller) protein is Cytochrome b (MT-CYB).